Reading from the N-terminus, the 281-residue chain is Cytosolic Fe-S cluster assembly factor CFD1 (281 aa).

Position 24–31 (24–31 (GKGGVGKS)) interacts with ATP. [4Fe-4S] cluster contacts are provided by Cys-201 and Cys-204.

This sequence belongs to the Mrp/NBP35 ATP-binding proteins family. NUBP2/CFD1 subfamily. Heterotetramer of 2 NBP35 and 2 CFD1 chains. [4Fe-4S] cluster is required as a cofactor.

It localises to the cytoplasm. Functionally, component of the cytosolic iron-sulfur (Fe/S) protein assembly (CIA) machinery. Required for maturation of extramitochondrial Fe-S proteins. The NBP35-CFD1 heterotetramer forms a Fe-S scaffold complex, mediating the de novo assembly of an Fe-S cluster and its transfer to target apoproteins. Required for biogenesis and export of both ribosomal subunits, which may reflect a role in assembly of the Fe/S clusters in RLI1, a protein which performs rRNA processing and ribosome export. This Eremothecium gossypii (strain ATCC 10895 / CBS 109.51 / FGSC 9923 / NRRL Y-1056) (Yeast) protein is Cytosolic Fe-S cluster assembly factor CFD1.